Reading from the N-terminus, the 200-residue chain is Protein GrpE (200 aa).

This sequence belongs to the GrpE family. Homodimer.

The protein resides in the cytoplasm. In terms of biological role, participates actively in the response to hyperosmotic and heat shock by preventing the aggregation of stress-denatured proteins, in association with DnaK and GrpE. It is the nucleotide exchange factor for DnaK and may function as a thermosensor. Unfolded proteins bind initially to DnaJ; upon interaction with the DnaJ-bound protein, DnaK hydrolyzes its bound ATP, resulting in the formation of a stable complex. GrpE releases ADP from DnaK; ATP binding to DnaK triggers the release of the substrate protein, thus completing the reaction cycle. Several rounds of ATP-dependent interactions between DnaJ, DnaK and GrpE are required for fully efficient folding. The protein is Protein GrpE of Geobacter sulfurreducens (strain ATCC 51573 / DSM 12127 / PCA).